Consider the following 117-residue polypeptide: Hydrogenase maturation factor HypA (117 aa).

A Ni(2+)-binding site is contributed by histidine 2. Cysteine 73, cysteine 76, cysteine 89, and cysteine 92 together coordinate Zn(2+).

This sequence belongs to the HypA/HybF family.

Its function is as follows. Involved in the maturation of [NiFe] hydrogenases. Required for nickel insertion into the metal center of the hydrogenase. The sequence is that of Hydrogenase maturation factor HypA from Shewanella baltica (strain OS195).